We begin with the raw amino-acid sequence, 95 residues long: YcgL domain-containing protein Patl_2802 (95 aa).

A YcgL domain is found at 4-88 (LLCAVYKSSK…PEENLLKQHL (85 aa)).

In Pseudoalteromonas atlantica (strain T6c / ATCC BAA-1087), this protein is YcgL domain-containing protein Patl_2802.